Consider the following 466-residue polypeptide: Ribulose bisphosphate carboxylase large chain (466 aa).

At lysine 5 the chain carries N6,N6,N6-trimethyllysine. Positions 114 and 164 each coordinate substrate. Catalysis depends on lysine 166, which acts as the Proton acceptor. Lysine 168 contributes to the substrate binding site. Residues lysine 192, aspartate 194, and glutamate 195 each contribute to the Mg(2+) site. Residue lysine 192 is modified to N6-carboxylysine. The active-site Proton acceptor is histidine 285. The substrate site is built by arginine 286, histidine 318, and serine 370.

This sequence belongs to the RuBisCO large chain family. Type I subfamily. Heterohexadecamer of 8 large chains and 8 small chains; disulfide-linked. The disulfide link is formed within the large subunit homodimers. Mg(2+) serves as cofactor. In terms of processing, the disulfide bond which can form in the large chain dimeric partners within the hexadecamer appears to be associated with oxidative stress and protein turnover.

The protein localises to the plastid. The protein resides in the chloroplast. It carries out the reaction 2 (2R)-3-phosphoglycerate + 2 H(+) = D-ribulose 1,5-bisphosphate + CO2 + H2O. The enzyme catalyses D-ribulose 1,5-bisphosphate + O2 = 2-phosphoglycolate + (2R)-3-phosphoglycerate + 2 H(+). In terms of biological role, ruBisCO catalyzes two reactions: the carboxylation of D-ribulose 1,5-bisphosphate, the primary event in carbon dioxide fixation, as well as the oxidative fragmentation of the pentose substrate in the photorespiration process. Both reactions occur simultaneously and in competition at the same active site. The sequence is that of Ribulose bisphosphate carboxylase large chain from Adenium obesum (Desert rose).